The primary structure comprises 115 residues: MNLLIIITINITLSFILISIAFWLPQMNLYSEKANPYECGFDPTSSARLPFSMKFFLVAITFLLFDLEIALLLPLPWAIQTTNTTTMMATAFILVTILALGLSYEWTQKGLEWTE.

3 helical membrane-spanning segments follow: residues 3 to 23 (LLII…IAFW), 55 to 75 (FFLV…LLPL), and 86 to 106 (TMMA…SYEW).

This sequence belongs to the complex I subunit 3 family. In terms of assembly, core subunit of respiratory chain NADH dehydrogenase (Complex I) which is composed of 45 different subunits. Interacts with TMEM186. Interacts with TMEM242.

It localises to the mitochondrion inner membrane. It carries out the reaction a ubiquinone + NADH + 5 H(+)(in) = a ubiquinol + NAD(+) + 4 H(+)(out). Functionally, core subunit of the mitochondrial membrane respiratory chain NADH dehydrogenase (Complex I) which catalyzes electron transfer from NADH through the respiratory chain, using ubiquinone as an electron acceptor. Essential for the catalytic activity of complex I. The sequence is that of NADH-ubiquinone oxidoreductase chain 3 from Rattus norvegicus (Rat).